The following is a 185-amino-acid chain: Ribosome-recycling factor (185 aa).

Belongs to the RRF family.

The protein localises to the cytoplasm. Functionally, responsible for the release of ribosomes from messenger RNA at the termination of protein biosynthesis. May increase the efficiency of translation by recycling ribosomes from one round of translation to another. In Aliarcobacter butzleri (strain RM4018) (Arcobacter butzleri), this protein is Ribosome-recycling factor.